The sequence spans 291 residues: Protease HtpX homolog (291 aa).

2 consecutive transmembrane segments (helical) span residues 11-31 (INTF…GLLA) and 34-54 (FLGM…ACVQ). A Zn(2+)-binding site is contributed by histidine 140. Residue glutamate 141 is part of the active site. A Zn(2+)-binding site is contributed by histidine 144. 2 helical membrane passes run 155 to 175 (IVFG…RALI) and 186 to 206 (AFSF…AMLV). Zn(2+) is bound at residue glutamate 215.

Belongs to the peptidase M48B family. The cofactor is Zn(2+).

The protein localises to the cell membrane. This chain is Protease HtpX homolog, found in Tropheryma whipplei (strain Twist) (Whipple's bacillus).